The following is a 274-amino-acid chain: NAD kinase (274 aa).

Asp-59 acts as the Proton acceptor in catalysis. NAD(+) is bound by residues Asp-59–Gly-60, Lys-64, Asn-128–Asp-129, Asp-158, Thr-169–Ser-174, and Ala-193.

The protein belongs to the NAD kinase family. The cofactor is a divalent metal cation.

The protein resides in the cytoplasm. The enzyme catalyses NAD(+) + ATP = ADP + NADP(+) + H(+). Its function is as follows. Involved in the regulation of the intracellular balance of NAD and NADP, and is a key enzyme in the biosynthesis of NADP. Catalyzes specifically the phosphorylation on 2'-hydroxyl of the adenosine moiety of NAD to yield NADP. The chain is NAD kinase from Petrotoga mobilis (strain DSM 10674 / SJ95).